A 91-amino-acid polypeptide reads, in one-letter code: Probable Fe(2+)-trafficking protein (91 aa).

The protein belongs to the Fe(2+)-trafficking protein family.

Could be a mediator in iron transactions between iron acquisition and iron-requiring processes, such as synthesis and/or repair of Fe-S clusters in biosynthetic enzymes. This Xanthomonas euvesicatoria pv. vesicatoria (strain 85-10) (Xanthomonas campestris pv. vesicatoria) protein is Probable Fe(2+)-trafficking protein.